Here is a 572-residue protein sequence, read N- to C-terminus: EF-hand calcium-binding domain-containing protein 12 (572 aa).

Disordered regions lie at residues 62–85 (VPRK…KPIP) and 146–169 (EQSA…PRLS). In terms of domain architecture, EF-hand spans 196 to 231 (SRKIKILEIFHKVGQGENQRITREEFIAAVKAVGVP). Residue E212 participates in Ca(2+) binding.

The chain is EF-hand calcium-binding domain-containing protein 12 (EFCAB12) from Homo sapiens (Human).